The sequence spans 271 residues: Hematopoietically-expressed homeobox protein Hhex (271 aa).

The interval 1–138 is interaction with SOX13; it reads MQFPHPGPAA…PFLQRPLHKR (138 aa). The residue at position 54 (Ser54) is a Phosphoserine. The homeobox DNA-binding region spans 138 to 197; that stretch reads RKGGQVRFSNDQTVELEKKFETQKYLSPPERKRLAKMLQLSERQVKTWFQNRRAKWRRLK. Residues 138–271 form a required for WNT signaling induction region; that stretch reads RKGGQVRFSN…EGDKGYFNAG (134 aa). The tract at residues 195 to 271 is disordered; the sequence is RLKQENPQSN…EGDKGYFNAG (77 aa). A compositionally biased stretch (polar residues) spans 212–242; the sequence is LDTSCEQGQDLPSEQNKGASLDRSQCSPSPA. The span at 245 to 261 shows a compositional bias: acidic residues; it reads EDPDSEISEDSDQEVDI.

Interacts with CD81; the interaction prevents nuclear translocation of HHEX. Interacts (via N-terminus) with SOX13; abolishes the SOX13-mediated inhibition of WNT-mediated transcriptional activity via competitive inhibition of the SOX13-TCF7 complex. Interacts with EIF4E; the interaction inhibits EIF4E-mediated mRNA nuclear export.

It is found in the nucleus. Its subcellular location is the nuclear body. The protein localises to the cytoplasm. Recognizes the DNA sequence 5'-ATTAA-3'. Transcriptional repressor. Activator of WNT-mediated transcription in conjunction with CTNNB1. Establishes anterior identity at two levels; acts early to enhance canonical WNT-signaling by repressing expression of TLE4, and acts later to inhibit NODAL-signaling by directly targeting NODAL. Inhibits EIF4E-mediated mRNA nuclear export. May play a role in hematopoietic differentiation. This is Hematopoietically-expressed homeobox protein Hhex (Hhex) from Mus musculus (Mouse).